An 832-amino-acid polypeptide reads, in one-letter code: Putative beta-glucosidase (832 aa).

Residue Asp-225 is part of the active site. The region spanning 397-556 (TGKHGYVAKF…DPETEIDYAV (160 aa)) is the PA14 domain.

This sequence belongs to the glycosyl hydrolase 3 family.

The protein localises to the cytoplasm. The enzyme catalyses Hydrolysis of terminal, non-reducing beta-D-glucosyl residues with release of beta-D-glucose.. The protein is Putative beta-glucosidase of Schizosaccharomyces pombe (strain 972 / ATCC 24843) (Fission yeast).